The following is a 310-amino-acid chain: tRNA dimethylallyltransferase (310 aa).

10 to 17 (GPTAVGKS) lines the ATP pocket. Residue 12-17 (TAVGKS) coordinates substrate. An interaction with substrate tRNA region spans residues 35 to 38 (DSMQ).

Belongs to the IPP transferase family. As to quaternary structure, monomer. Mg(2+) is required as a cofactor.

The enzyme catalyses adenosine(37) in tRNA + dimethylallyl diphosphate = N(6)-dimethylallyladenosine(37) in tRNA + diphosphate. Functionally, catalyzes the transfer of a dimethylallyl group onto the adenine at position 37 in tRNAs that read codons beginning with uridine, leading to the formation of N6-(dimethylallyl)adenosine (i(6)A). This Clostridium perfringens (strain SM101 / Type A) protein is tRNA dimethylallyltransferase.